Consider the following 299-residue polypeptide: S-methyl-5'-thioadenosine phosphorylase (299 aa).

Phosphate is bound by residues Ser-14, 56–57 (RH), and 89–90 (SA). A substrate-binding site is contributed by Met-191. Position 192 (Thr-192) interacts with phosphate. 215–217 (DYD) contributes to the substrate binding site.

It belongs to the PNP/MTAP phosphorylase family. MTAP subfamily. In terms of assembly, homohexamer. Dimer of a homotrimer.

The catalysed reaction is S-methyl-5'-thioadenosine + phosphate = 5-(methylsulfanyl)-alpha-D-ribose 1-phosphate + adenine. It functions in the pathway amino-acid biosynthesis; L-methionine biosynthesis via salvage pathway; S-methyl-5-thio-alpha-D-ribose 1-phosphate from S-methyl-5'-thioadenosine (phosphorylase route): step 1/1. Catalyzes the reversible phosphorylation of S-methyl-5'-thioadenosine (MTA) to adenine and 5-methylthioribose-1-phosphate. Involved in the breakdown of MTA, a major by-product of polyamine biosynthesis. Responsible for the first step in the methionine salvage pathway after MTA has been generated from S-adenosylmethionine. Has broad substrate specificity with 6-aminopurine nucleosides as preferred substrates. This chain is S-methyl-5'-thioadenosine phosphorylase, found in Gloeobacter violaceus (strain ATCC 29082 / PCC 7421).